The primary structure comprises 277 residues: Alpha carbonic anhydrase 3 (277 aa).

Positions 1 to 19 (MKTIILFVTFLALSSSSLA) are cleaved as a signal peptide. In terms of domain architecture, Alpha-carbonic anhydrase spans 24-259 (TEFHYKPGEI…LNGRLVYLNE (236 aa)). Residues C49 and C209 are joined by a disulfide bond. Residues N70 and N107 are each glycosylated (N-linked (GlcNAc...) asparagine). Zn(2+) is bound by residues H117, H119, and H136. 205–206 (TT) is a binding site for substrate. The segment at 257-277 (LNEQSSPSPTPRLRIPRVGPV) is disordered.

It belongs to the alpha-class carbonic anhydrase family. The cofactor is Zn(2+). Post-translationally, N-glycosylated. As to expression, expressed in flowers and siliques.

The protein resides in the plastid. The protein localises to the chloroplast stroma. The catalysed reaction is hydrogencarbonate + H(+) = CO2 + H2O. Its function is as follows. Reversible hydration of carbon dioxide. The chain is Alpha carbonic anhydrase 3 (ACA3) from Arabidopsis thaliana (Mouse-ear cress).